The chain runs to 389 residues: TelA-like protein SH1505 (389 aa).

The protein belongs to the TelA family.

This Staphylococcus haemolyticus (strain JCSC1435) protein is TelA-like protein SH1505.